Here is a 281-residue protein sequence, read N- to C-terminus: Pantothenate synthetase (281 aa).

30–37 (MGNLHLGH) contributes to the ATP binding site. The active-site Proton donor is the histidine 37. Glutamine 61 contributes to the (R)-pantoate binding site. Glutamine 61 provides a ligand contact to beta-alanine. Residue 149–152 (GRKD) coordinates ATP. (R)-pantoate is bound at residue glutamine 155. Residues isoleucine 178 and 186 to 189 (MSSR) contribute to the ATP site.

This sequence belongs to the pantothenate synthetase family. Homodimer.

It localises to the cytoplasm. It catalyses the reaction (R)-pantoate + beta-alanine + ATP = (R)-pantothenate + AMP + diphosphate + H(+). It participates in cofactor biosynthesis; (R)-pantothenate biosynthesis; (R)-pantothenate from (R)-pantoate and beta-alanine: step 1/1. Its function is as follows. Catalyzes the condensation of pantoate with beta-alanine in an ATP-dependent reaction via a pantoyl-adenylate intermediate. This Shewanella sediminis (strain HAW-EB3) protein is Pantothenate synthetase.